The following is a 479-amino-acid chain: Bifunctional protein HldE (479 aa).

The interval 1–322 (MLAETQLAPI…AALERTAAQI (322 aa)) is ribokinase. 198 to 201 (NRRE) is an ATP binding site. Residue aspartate 267 is part of the active site. Positions 350–479 (FTNGCFDLVH…TSSLVAKART (130 aa)) are cytidylyltransferase.

This sequence in the N-terminal section; belongs to the carbohydrate kinase PfkB family. In the C-terminal section; belongs to the cytidylyltransferase family. Homodimer.

It carries out the reaction D-glycero-beta-D-manno-heptose 7-phosphate + ATP = D-glycero-beta-D-manno-heptose 1,7-bisphosphate + ADP + H(+). The enzyme catalyses D-glycero-beta-D-manno-heptose 1-phosphate + ATP + H(+) = ADP-D-glycero-beta-D-manno-heptose + diphosphate. It participates in nucleotide-sugar biosynthesis; ADP-L-glycero-beta-D-manno-heptose biosynthesis; ADP-L-glycero-beta-D-manno-heptose from D-glycero-beta-D-manno-heptose 7-phosphate: step 1/4. Its pathway is nucleotide-sugar biosynthesis; ADP-L-glycero-beta-D-manno-heptose biosynthesis; ADP-L-glycero-beta-D-manno-heptose from D-glycero-beta-D-manno-heptose 7-phosphate: step 3/4. Its function is as follows. Catalyzes the phosphorylation of D-glycero-D-manno-heptose 7-phosphate at the C-1 position to selectively form D-glycero-beta-D-manno-heptose-1,7-bisphosphate. Functionally, catalyzes the ADP transfer from ATP to D-glycero-beta-D-manno-heptose 1-phosphate, yielding ADP-D-glycero-beta-D-manno-heptose. The chain is Bifunctional protein HldE from Azorhizobium caulinodans (strain ATCC 43989 / DSM 5975 / JCM 20966 / LMG 6465 / NBRC 14845 / NCIMB 13405 / ORS 571).